Reading from the N-terminus, the 418-residue chain is Methylmalonic aciduria type A protein, mitochondrial (418 aa).

The N-terminal 65 residues, methionine 1–leucine 65, are a transit peptide targeting the mitochondrion. GTP contacts are provided by residues glycine 150–threonine 158, aspartate 292, and serine 328–arginine 330.

It belongs to the SIMIBI class G3E GTPase family. ArgK/MeaB subfamily. As to quaternary structure, homodimer. Interacts with MMUT (the apoenzyme form); the interaction is GTP dependent. Widely expressed. Highest expression is observed in liver and skeletal muscle.

Its subcellular location is the mitochondrion. It localises to the cytoplasm. It catalyses the reaction GTP + H2O = GDP + phosphate + H(+). Its activity is regulated as follows. GTPase activity is stimulated by MMUT. Functionally, GTPase, binds and hydrolyzes GTP. Involved in intracellular vitamin B12 metabolism, mediates the transport of cobalamin (Cbl) into mitochondria for the final steps of adenosylcobalamin (AdoCbl) synthesis. Functions as a G-protein chaperone that assists AdoCbl cofactor delivery from MMAB to the methylmalonyl-CoA mutase (MMUT). Plays a dual role as both a protectase and a reactivase for MMUT. Protects MMUT from progressive inactivation by oxidation by decreasing the rate of the formation of the oxidized inactive cofactor hydroxocobalamin (OH2Cbl). Additionally acts a reactivase by promoting the replacement of OH2Cbl by the active cofactor AdoCbl, restoring the activity of MMUT in the presence and hydrolysis of GTP. This is Methylmalonic aciduria type A protein, mitochondrial from Homo sapiens (Human).